Here is a 504-residue protein sequence, read N- to C-terminus: Cytochrome P450 2D10 (504 aa).

O-linked (GlcNAc) serine glycosylation occurs at Ser-382. Cys-446 serves as a coordination point for heme.

The protein belongs to the cytochrome P450 family. It depends on heme as a cofactor.

The protein resides in the endoplasmic reticulum membrane. It is found in the microsome membrane. The enzyme catalyses an organic molecule + reduced [NADPH--hemoprotein reductase] + O2 = an alcohol + oxidized [NADPH--hemoprotein reductase] + H2O + H(+). Cytochromes P450 are a group of heme-thiolate monooxygenases. In liver microsomes, this enzyme is involved in an NADPH-dependent electron transport pathway. It oxidizes a variety of structurally unrelated compounds, including steroids, fatty acids, and xenobiotics. The chain is Cytochrome P450 2D10 (Cyp2d10) from Rattus norvegicus (Rat).